A 268-amino-acid polypeptide reads, in one-letter code: Homeobox protein Hox-D12 (268 aa).

The segment at 102 to 124 (TPDAPTASEERSRTRPPFAPESS) is disordered. A DNA-binding region (homeobox) is located at residues 200–259 (ARKKRKPYTKQQIAELENEFLVNEFINRQKRKELSNRLNLSDQQVKIWFQNRRMKKKRVV).

The protein belongs to the Abd-B homeobox family.

The protein localises to the nucleus. Its function is as follows. Sequence-specific transcription factor which is part of a developmental regulatory system that provides cells with specific positional identities on the anterior-posterior axis. The chain is Homeobox protein Hox-D12 (Hoxd12) from Mus musculus (Mouse).